A 468-amino-acid chain; its full sequence is Inositol polyphosphate 5-phosphatase K (468 aa).

The segment at 34-337 is catalytic; it reads VHVVTWNVAS…SDHKPVTGTF (304 aa). Positions 318–448 are required for interaction with GPR78 and PAK1; it reads NYVSHMAYSI…HSVVGISQPF (131 aa). Residues 340-468 are required for ruffle localization; the sequence is ELNPLMSVPL…DTLYEPEPQI (129 aa).

The protein belongs to the inositol 1,4,5-trisphosphate 5-phosphatase type II family. As to quaternary structure, interacts with GPR78; necessary for INPP5K localization at the endoplasmic reticulum. Interacts with PAK1; competes with GPR78. In terms of tissue distribution, expressed in the skeletal muscle and the eye.

It is found in the endoplasmic reticulum. The protein localises to the cytoplasm. The catalysed reaction is 1D-myo-inositol 1,4,5-trisphosphate + H2O = 1D-myo-inositol 1,4-bisphosphate + phosphate. The enzyme catalyses 1,2-dioctanoyl-sn-glycero-3-phospho-(1D-myo-inositol-3,4,5-trisphosphate) + H2O = 1,2-dioctanoyl-sn-glycero-3-phospho-(1D-myo-inositol-3,4-bisphosphate) + phosphate. It carries out the reaction 1D-myo-inositol 1,3,4,5-tetrakisphosphate + H2O = 1D-myo-inositol 1,3,4-trisphosphate + phosphate. It catalyses the reaction a 1,2-diacyl-sn-glycero-3-phospho-(1D-myo-inositol-4,5-bisphosphate) + H2O = a 1,2-diacyl-sn-glycero-3-phospho-(1D-myo-inositol 4-phosphate) + phosphate. The catalysed reaction is a 1,2-diacyl-sn-glycero-3-phospho-(1D-myo-inositol-3,4,5-trisphosphate) + H2O = a 1,2-diacyl-sn-glycero-3-phospho-(1D-myo-inositol-3,4-bisphosphate) + phosphate. In terms of biological role, inositol 5-phosphatase which acts on inositol 1,4,5-trisphosphate, inositol 1,3,4,5-tetrakisphosphate, phosphatidylinositol 4,5-bisphosphate and phosphatidylinositol 3,4,5-trisphosphate. Has 6-fold higher affinity for phosphatidylinositol 4,5-bisphosphate than for inositol 1,4,5-trisphosphate. Negatively regulates assembly of the actin cytoskeleton. Controls insulin-dependent glucose uptake among inositol 3,4,5-trisphosphate phosphatases; therefore, is the specific regulator for insulin signaling in skeletal muscle. The polypeptide is Inositol polyphosphate 5-phosphatase K (Mus musculus (Mouse)).